The following is a 660-amino-acid chain: tRNA 5-methylaminomethyl-2-thiouridine biosynthesis bifunctional protein MnmC (660 aa).

Positions 1–235 are tRNA (mnm(5)s(2)U34)-methyltransferase; sequence MTITRHARID…KWEVLRGTFI (235 aa). Positions 266 to 660 are FAD-dependent cmnm(5)s(2)U34 oxidoreductase; it reads IGAGLAGCAT…LRGLIRGGGK (395 aa).

It in the N-terminal section; belongs to the methyltransferase superfamily. tRNA (mnm(5)s(2)U34)-methyltransferase family. This sequence in the C-terminal section; belongs to the DAO family. Requires FAD as cofactor.

Its subcellular location is the cytoplasm. It catalyses the reaction 5-aminomethyl-2-thiouridine(34) in tRNA + S-adenosyl-L-methionine = 5-methylaminomethyl-2-thiouridine(34) in tRNA + S-adenosyl-L-homocysteine + H(+). Its function is as follows. Catalyzes the last two steps in the biosynthesis of 5-methylaminomethyl-2-thiouridine (mnm(5)s(2)U) at the wobble position (U34) in tRNA. Catalyzes the FAD-dependent demodification of cmnm(5)s(2)U34 to nm(5)s(2)U34, followed by the transfer of a methyl group from S-adenosyl-L-methionine to nm(5)s(2)U34, to form mnm(5)s(2)U34. The sequence is that of tRNA 5-methylaminomethyl-2-thiouridine biosynthesis bifunctional protein MnmC from Pseudomonas savastanoi pv. phaseolicola (strain 1448A / Race 6) (Pseudomonas syringae pv. phaseolicola (strain 1448A / Race 6)).